The primary structure comprises 55 residues: Large ribosomal subunit protein bL33 (55 aa).

Belongs to the bacterial ribosomal protein bL33 family.

This chain is Large ribosomal subunit protein bL33, found in Parvibaculum lavamentivorans (strain DS-1 / DSM 13023 / NCIMB 13966).